The chain runs to 178 residues: Cytidylate kinase (178 aa).

Position 7–15 (7–15 (GLPGTGTTT)) interacts with ATP.

This sequence belongs to the cytidylate kinase family. Type 2 subfamily.

The protein localises to the cytoplasm. The catalysed reaction is CMP + ATP = CDP + ADP. It carries out the reaction dCMP + ATP = dCDP + ADP. This chain is Cytidylate kinase, found in Methanococcus maripaludis (strain C7 / ATCC BAA-1331).